The following is a 79-amino-acid chain: DNA-directed RNA polymerase subunit omega (79 aa).

This sequence belongs to the RNA polymerase subunit omega family. As to quaternary structure, the RNAP catalytic core consists of 2 alpha, 1 beta, 1 beta' and 1 omega subunit. When a sigma factor is associated with the core the holoenzyme is formed, which can initiate transcription.

The enzyme catalyses RNA(n) + a ribonucleoside 5'-triphosphate = RNA(n+1) + diphosphate. Promotes RNA polymerase assembly. Latches the N- and C-terminal regions of the beta' subunit thereby facilitating its interaction with the beta and alpha subunits. The protein is DNA-directed RNA polymerase subunit omega of Thermotoga petrophila (strain ATCC BAA-488 / DSM 13995 / JCM 10881 / RKU-1).